A 497-amino-acid chain; its full sequence is Glycerol kinase (497 aa).

Residue Thr-12 coordinates ADP. 3 residues coordinate ATP: Thr-12, Thr-13, and Ser-14. Thr-12 is a sn-glycerol 3-phosphate binding site. Position 16 (Arg-16) interacts with ADP. Arg-82, Glu-83, Tyr-134, and Asp-243 together coordinate sn-glycerol 3-phosphate. 5 residues coordinate glycerol: Arg-82, Glu-83, Tyr-134, Asp-243, and Gln-244. Residues Thr-265 and Gly-308 each contribute to the ADP site. ATP is bound by residues Thr-265, Gly-308, Gln-312, and Gly-409. Residues Gly-409 and Asn-413 each coordinate ADP.

Belongs to the FGGY kinase family.

The enzyme catalyses glycerol + ATP = sn-glycerol 3-phosphate + ADP + H(+). Its pathway is polyol metabolism; glycerol degradation via glycerol kinase pathway; sn-glycerol 3-phosphate from glycerol: step 1/1. Inhibited by fructose 1,6-bisphosphate (FBP). Key enzyme in the regulation of glycerol uptake and metabolism. Catalyzes the phosphorylation of glycerol to yield sn-glycerol 3-phosphate. In Nitratidesulfovibrio vulgaris (strain DSM 19637 / Miyazaki F) (Desulfovibrio vulgaris), this protein is Glycerol kinase.